A 160-amino-acid polypeptide reads, in one-letter code: NADH-quinone oxidoreductase subunit B (160 aa).

[4Fe-4S] cluster is bound by residues Cys-37, Cys-38, Cys-102, and Cys-132.

It belongs to the complex I 20 kDa subunit family. NDH-1 is composed of 14 different subunits. Subunits NuoB, C, D, E, F, and G constitute the peripheral sector of the complex. It depends on [4Fe-4S] cluster as a cofactor.

The protein localises to the cell inner membrane. The catalysed reaction is a quinone + NADH + 5 H(+)(in) = a quinol + NAD(+) + 4 H(+)(out). NDH-1 shuttles electrons from NADH, via FMN and iron-sulfur (Fe-S) centers, to quinones in the respiratory chain. Couples the redox reaction to proton translocation (for every two electrons transferred, four hydrogen ions are translocated across the cytoplasmic membrane), and thus conserves the redox energy in a proton gradient. This Cupriavidus metallidurans (strain ATCC 43123 / DSM 2839 / NBRC 102507 / CH34) (Ralstonia metallidurans) protein is NADH-quinone oxidoreductase subunit B.